Here is a 339-residue protein sequence, read N- to C-terminus: S-adenosylmethionine:tRNA ribosyltransferase-isomerase (339 aa).

It belongs to the QueA family. As to quaternary structure, monomer.

It is found in the cytoplasm. It catalyses the reaction 7-aminomethyl-7-carbaguanosine(34) in tRNA + S-adenosyl-L-methionine = epoxyqueuosine(34) in tRNA + adenine + L-methionine + 2 H(+). The protein operates within tRNA modification; tRNA-queuosine biosynthesis. Its function is as follows. Transfers and isomerizes the ribose moiety from AdoMet to the 7-aminomethyl group of 7-deazaguanine (preQ1-tRNA) to give epoxyqueuosine (oQ-tRNA). The protein is S-adenosylmethionine:tRNA ribosyltransferase-isomerase of Campylobacter fetus subsp. fetus (strain 82-40).